A 294-amino-acid chain; its full sequence is Lipoyl synthase (294 aa).

Residues cysteine 41, cysteine 46, cysteine 52, cysteine 67, cysteine 71, cysteine 74, and serine 281 each contribute to the [4Fe-4S] cluster site. One can recognise a Radical SAM core domain in the interval 53–270; sequence FNNGTATFMI…KLESLAMGFT (218 aa).

This sequence belongs to the radical SAM superfamily. Lipoyl synthase family. It depends on [4Fe-4S] cluster as a cofactor.

It localises to the cytoplasm. The catalysed reaction is [[Fe-S] cluster scaffold protein carrying a second [4Fe-4S](2+) cluster] + N(6)-octanoyl-L-lysyl-[protein] + 2 oxidized [2Fe-2S]-[ferredoxin] + 2 S-adenosyl-L-methionine + 4 H(+) = [[Fe-S] cluster scaffold protein] + N(6)-[(R)-dihydrolipoyl]-L-lysyl-[protein] + 4 Fe(3+) + 2 hydrogen sulfide + 2 5'-deoxyadenosine + 2 L-methionine + 2 reduced [2Fe-2S]-[ferredoxin]. It functions in the pathway protein modification; protein lipoylation via endogenous pathway; protein N(6)-(lipoyl)lysine from octanoyl-[acyl-carrier-protein]: step 2/2. Its function is as follows. Catalyzes the radical-mediated insertion of two sulfur atoms into the C-6 and C-8 positions of the octanoyl moiety bound to the lipoyl domains of lipoate-dependent enzymes, thereby converting the octanoylated domains into lipoylated derivatives. The protein is Lipoyl synthase of Baumannia cicadellinicola subsp. Homalodisca coagulata.